The chain runs to 361 residues: Salt tolerance receptor-like cytoplasmic kinase 1 (361 aa).

Residues Cys-5, Cys-10, and Cys-14 are each lipidated (S-palmitoyl cysteine). Positions 67-347 (GFSSRVIGHG…RALQEKTSAL (281 aa)) constitute a Protein kinase domain. ATP contacts are provided by residues 73 to 81 (IGHGGFSTV) and Lys-95. Residue Asp-195 is the Proton acceptor of the active site.

It belongs to the protein kinase superfamily. Ser/Thr protein kinase family. In terms of assembly, self-interacts. Interacts with CATA, CATB and CATC at the plasma membrane. Post-translationally, palmitoylated. Palmotylation at Cys-5, Cys-10 and Cys-14 by DHHC9 is required for plasma membrane targeting and STRK1 function. Autophosphorylated. As to expression, accumulates in seeds. Mainly expressed in young roots, and, to a lower extent, in leaf veins, seedlings, stems, leaf sheath and young spikelet.

It is found in the cell membrane. The catalysed reaction is L-seryl-[protein] + ATP = O-phospho-L-seryl-[protein] + ADP + H(+). It carries out the reaction L-threonyl-[protein] + ATP = O-phospho-L-threonyl-[protein] + ADP + H(+). The enzyme catalyses L-tyrosyl-[protein] + ATP = O-phospho-L-tyrosyl-[protein] + ADP + H(+). Acts probably as a dual specificity protein kinase. Regulates hydrogen peroxide (H(2)O(2)) homeostasis and improves salt tolerance by phosphorylating tyrosine residues of CATC thus activating its catalase activity. Promotes growth at the seedling stage and prevents grain yield loss under salt stress conditions. This chain is Salt tolerance receptor-like cytoplasmic kinase 1, found in Oryza sativa subsp. japonica (Rice).